Consider the following 280-residue polypeptide: Golgi to ER traffic protein 2 (280 aa).

Basic and acidic residues-rich tracts occupy residues Met1–Gln17, Ser44–Lys62, and Ala71–Lys80. The disordered stretch occupies residues Met1–Lys80. The Cytoplasmic segment spans residues Met1–Thr146. Residues Leu147–Leu166 form a helical membrane-spanning segment. The Lumenal portion of the chain corresponds to Thr167–Ser191. The chain crosses the membrane as a helical span at residues Phe192–Ser211. Residues Val212 to Asn258 are Cytoplasmic-facing. The chain crosses the membrane as a helical span at residues Ile259 to Gln279. Residue Ile280 is a topological domain, lumenal.

It belongs to the GET2 family. Component of the Golgi to ER traffic (GET) complex, which is composed of GET1, GET2 and GET3. Within the complex, GET1 and GET2 form a heterotetramer which is stabilized by phosphatidylinositol binding and which binds to the GET3 homodimer.

Its subcellular location is the endoplasmic reticulum membrane. It is found in the golgi apparatus membrane. Functionally, required for the post-translational delivery of tail-anchored (TA) proteins to the endoplasmic reticulum. Together with GET1, acts as a membrane receptor for soluble GET3, which recognizes and selectively binds the transmembrane domain of TA proteins in the cytosol. The GET complex cooperates with the HDEL receptor ERD2 to mediate the ATP-dependent retrieval of resident ER proteins that contain a C-terminal H-D-E-L retention signal from the Golgi to the ER. The protein is Golgi to ER traffic protein 2 of Candida glabrata (strain ATCC 2001 / BCRC 20586 / JCM 3761 / NBRC 0622 / NRRL Y-65 / CBS 138) (Yeast).